The sequence spans 297 residues: Putative F-box protein At2g19630 (297 aa).

The region spanning 11-60 (TKNSLQIPIDLIIEIFLRLSVNSIARCRCVSKQWASTLSRPYFTELFLTR) is the F-box domain.

This Arabidopsis thaliana (Mouse-ear cress) protein is Putative F-box protein At2g19630.